The primary structure comprises 119 residues: Phenol 2-monooxygenase, oxygenase component DmpO (119 aa).

As to quaternary structure, the multicomponent enzyme phenol hydroxylase is formed by DmpL (P1 component), DmpM (P2 component), DmpN (P3 component), DmpO (P4 component) and DmpP (P5 component). The oxygenase component is a dimer composed of three subunits, DmpL, DmpN and DmpO (DmpLNO).

It carries out the reaction phenol + NADH + O2 + H(+) = catechol + NAD(+) + H2O. The protein operates within aromatic compound metabolism; phenol degradation. With respect to regulation, requires DmpM for efficient turnover. The activity of DmpLNO oxygenase is inhibited by dithiothreitol (DTT) by a mechanism apparently involving H(2)O(2) generation. Part of a multicomponent enzyme which catalyzes the degradation of phenol and some of its methylated derivatives. DmpL, DmpN and DmpO form the oxygenase component of the complex. Required for growth on phenol and for in vitro phenol hydroxylase activity. The sequence is that of Phenol 2-monooxygenase, oxygenase component DmpO from Pseudomonas sp. (strain CF600).